Reading from the N-terminus, the 130-residue chain is Large ribosomal subunit protein bL12 (130 aa).

It belongs to the bacterial ribosomal protein bL12 family. In terms of assembly, homodimer. Part of the ribosomal stalk of the 50S ribosomal subunit. Forms a multimeric L10(L12)X complex, where L10 forms an elongated spine to which 2 to 4 L12 dimers bind in a sequential fashion. Binds GTP-bound translation factors.

Functionally, forms part of the ribosomal stalk which helps the ribosome interact with GTP-bound translation factors. Is thus essential for accurate translation. The sequence is that of Large ribosomal subunit protein bL12 from Synechococcus sp. (strain RCC307).